Here is a 166-residue protein sequence, read N- to C-terminus: Crossover junction endodeoxyribonuclease RuvC (166 aa).

Residues Asp-11, Glu-70, and Asp-142 contribute to the active site. The Mg(2+) site is built by Asp-11, Glu-70, and Asp-142.

It belongs to the RuvC family. In terms of assembly, homodimer which binds Holliday junction (HJ) DNA. The HJ becomes 2-fold symmetrical on binding to RuvC with unstacked arms; it has a different conformation from HJ DNA in complex with RuvA. In the full resolvosome a probable DNA-RuvA(4)-RuvB(12)-RuvC(2) complex forms which resolves the HJ. Mg(2+) serves as cofactor.

It is found in the cytoplasm. It carries out the reaction Endonucleolytic cleavage at a junction such as a reciprocal single-stranded crossover between two homologous DNA duplexes (Holliday junction).. The RuvA-RuvB-RuvC complex processes Holliday junction (HJ) DNA during genetic recombination and DNA repair. Endonuclease that resolves HJ intermediates. Cleaves cruciform DNA by making single-stranded nicks across the HJ at symmetrical positions within the homologous arms, yielding a 5'-phosphate and a 3'-hydroxyl group; requires a central core of homology in the junction. The consensus cleavage sequence is 5'-(A/T)TT(C/G)-3'. Cleavage occurs on the 3'-side of the TT dinucleotide at the point of strand exchange. HJ branch migration catalyzed by RuvA-RuvB allows RuvC to scan DNA until it finds its consensus sequence, where it cleaves and resolves the cruciform DNA. This chain is Crossover junction endodeoxyribonuclease RuvC, found in Nitratidesulfovibrio vulgaris (strain ATCC 29579 / DSM 644 / CCUG 34227 / NCIMB 8303 / VKM B-1760 / Hildenborough) (Desulfovibrio vulgaris).